Here is a 757-residue protein sequence, read N- to C-terminus: Elongation factor G, mitochondrial (757 aa).

The tr-type G domain occupies 66-344 (DRMRNIGISA…VLDYLPCPME (279 aa)). GTP-binding positions include 75–82 (AHIDSGKT), 142–146 (DTPGH), and 196–199 (NKLD).

Belongs to the TRAFAC class translation factor GTPase superfamily. Classic translation factor GTPase family. EF-G/EF-2 subfamily.

It is found in the mitochondrion. The protein operates within protein biosynthesis; polypeptide chain elongation. In terms of biological role, mitochondrial GTPase that catalyzes the GTP-dependent ribosomal translocation step during translation elongation. During this step, the ribosome changes from the pre-translocational (PRE) to the post-translocational (POST) state as the newly formed A-site-bound peptidyl-tRNA and P-site-bound deacylated tRNA move to the P and E sites, respectively. Catalyzes the coordinated movement of the two tRNA molecules, the mRNA and conformational changes in the ribosome. In Oryza sativa subsp. japonica (Rice), this protein is Elongation factor G, mitochondrial.